Reading from the N-terminus, the 297-residue chain is MEEVESIHKPVMLKEVIHYLNLSPGKIVVDATLGLGGHSSEILRELRGEGLLIGIDRDEEVLKLARERLSKIAGNFVLFNTTYDNLQNILKELNLSFIDAILFDLGFSSFHIEKSGRGFSFMRPEEPLDMRYSKDTALTAADILNTFSESELSNLFWEYGEEPLSKKLAKKIVERRKDKKFAYVGDLLEVIDEVIPRRRRHEATKVFQALRIAVNDELNIFKRALEQVPFILSIGGRIVVITYHSLEDRIVKNFFKSYSDKILPVSKKVIKPSIEEIKENRRARSAKLRVGERRENS.

S-adenosyl-L-methionine is bound by residues 36–38, Asp56, Leu90, Asp104, and His111; that span reads GGH.

This sequence belongs to the methyltransferase superfamily. RsmH family.

Its subcellular location is the cytoplasm. The enzyme catalyses cytidine(1402) in 16S rRNA + S-adenosyl-L-methionine = N(4)-methylcytidine(1402) in 16S rRNA + S-adenosyl-L-homocysteine + H(+). Functionally, specifically methylates the N4 position of cytidine in position 1402 (C1402) of 16S rRNA. This Dictyoglomus thermophilum (strain ATCC 35947 / DSM 3960 / H-6-12) protein is Ribosomal RNA small subunit methyltransferase H.